Reading from the N-terminus, the 246-residue chain is Dihydromethanopterin reductase (acceptor) (246 aa).

4Fe-4S ferredoxin-type domains lie at 150–178 (LPYAIDKKKCKLCLKCINVCPNGAIVKRD) and 179–208 (NFVEILLSKCLGCGNCKKVCPYNAIIEGKE). Residues Cys-159, Cys-162, Cys-165, Cys-169, Cys-188, Cys-191, Cys-194, and Cys-198 each contribute to the [4Fe-4S] cluster site.

As to quaternary structure, homodimer. It depends on [4Fe-4S] cluster as a cofactor.

It catalyses the reaction 5,6,7,8-tetrahydromethanopterin + A = 7,8-dihydromethanopterin + AH2. Its pathway is cofactor biosynthesis; 5,6,7,8-tetrahydromethanopterin biosynthesis. Its function is as follows. Involved in the biosynthesis of tetrahydromethanopterin, a coenzyme used in methanogenesis. Catalyzes the reduction of dihydromethanopterin (H(2)MPT) to tetrahydromethanopterin (H(4)MPT). Ferredoxin may serve as an electron donor. In Methanocaldococcus jannaschii (strain ATCC 43067 / DSM 2661 / JAL-1 / JCM 10045 / NBRC 100440) (Methanococcus jannaschii), this protein is Dihydromethanopterin reductase (acceptor).